A 33-amino-acid chain; its full sequence is Photosystem II reaction center protein T (33 aa).

The chain crosses the membrane as a helical span at residues 3–23; the sequence is ALVYTFLLVSTLGIIFFAIFF.

Belongs to the PsbT family. PSII is composed of 1 copy each of membrane proteins PsbA, PsbB, PsbC, PsbD, PsbE, PsbF, PsbH, PsbI, PsbJ, PsbK, PsbL, PsbM, PsbT, PsbY, PsbZ, Psb30/Ycf12, at least 3 peripheral proteins of the oxygen-evolving complex and a large number of cofactors. It forms dimeric complexes.

It is found in the plastid. The protein localises to the chloroplast thylakoid membrane. Its function is as follows. Found at the monomer-monomer interface of the photosystem II (PS II) dimer, plays a role in assembly and dimerization of PSII. PSII is a light-driven water plastoquinone oxidoreductase, using light energy to abstract electrons from H(2)O, generating a proton gradient subsequently used for ATP formation. In Asparagus officinalis (Garden asparagus), this protein is Photosystem II reaction center protein T.